Here is a 343-residue protein sequence, read N- to C-terminus: NADH-cytochrome b5 reductase 2 (343 aa).

Residues 41-61 (ILLGAAAVGLAGAGAYFFSGA) traverse the membrane as a helical segment. The FAD-binding FR-type domain maps to 92–197 (QGWLSLKLEE…KGPLPKYPWE (106 aa)). Position 200–235 (200–235 (KHKHIALVAGGTGITPMYQLIRAIFNNPDDKTKVTL)) interacts with FAD.

This sequence belongs to the flavoprotein pyridine nucleotide cytochrome reductase family. It depends on FAD as a cofactor.

It localises to the mitochondrion outer membrane. The enzyme catalyses 2 Fe(III)-[cytochrome b5] + NADH = 2 Fe(II)-[cytochrome b5] + NAD(+) + H(+). May mediate the reduction of outer membrane cytochrome b5. The sequence is that of NADH-cytochrome b5 reductase 2 (mcr-1) from Neurospora crassa (strain ATCC 24698 / 74-OR23-1A / CBS 708.71 / DSM 1257 / FGSC 987).